The chain runs to 165 residues: Mid1-interacting protein 1-like (165 aa).

A disordered region spans residues 46–67 (DQESHASVSHNNNNNNEPSFPN).

This sequence belongs to the SPOT14 family.

Its subcellular location is the nucleus. It localises to the cytoplasm. It is found in the cytoskeleton. In terms of biological role, involved in stabilization of microtubules. May play a role in the regulation of lipogenesis. The sequence is that of Mid1-interacting protein 1-like from Danio rerio (Zebrafish).